The primary structure comprises 538 residues: Chaperonin GroEL (538 aa).

Residues Thr29 to Pro32, Asp86 to Thr90, Gly413, Asn476 to Ala478, and Asp492 each bind ATP.

It belongs to the chaperonin (HSP60) family. In terms of assembly, forms a cylinder of 14 subunits composed of two heptameric rings stacked back-to-back. Interacts with the co-chaperonin GroES.

It is found in the cytoplasm. The enzyme catalyses ATP + H2O + a folded polypeptide = ADP + phosphate + an unfolded polypeptide.. Functionally, together with its co-chaperonin GroES, plays an essential role in assisting protein folding. The GroEL-GroES system forms a nano-cage that allows encapsulation of the non-native substrate proteins and provides a physical environment optimized to promote and accelerate protein folding. This Staphylococcus aureus (strain Mu3 / ATCC 700698) protein is Chaperonin GroEL.